Reading from the N-terminus, the 85-residue chain is Large ribosomal subunit protein bL27 (85 aa).

The protein belongs to the bacterial ribosomal protein bL27 family.

This is Large ribosomal subunit protein bL27 from Persephonella marina (strain DSM 14350 / EX-H1).